Here is a 211-residue protein sequence, read N- to C-terminus: Imidazole glycerol phosphate synthase subunit HisH (211 aa).

The region spanning 3 to 211 is the Glutamine amidotransferase type-1 domain; it reads VIAVVDYEMG…VAQVREKIPA (209 aa). Catalysis depends on cysteine 81, which acts as the Nucleophile. Residues histidine 186 and glutamate 188 contribute to the active site.

Heterodimer of HisH and HisF.

Its subcellular location is the cytoplasm. It carries out the reaction 5-[(5-phospho-1-deoxy-D-ribulos-1-ylimino)methylamino]-1-(5-phospho-beta-D-ribosyl)imidazole-4-carboxamide + L-glutamine = D-erythro-1-(imidazol-4-yl)glycerol 3-phosphate + 5-amino-1-(5-phospho-beta-D-ribosyl)imidazole-4-carboxamide + L-glutamate + H(+). It catalyses the reaction L-glutamine + H2O = L-glutamate + NH4(+). It functions in the pathway amino-acid biosynthesis; L-histidine biosynthesis; L-histidine from 5-phospho-alpha-D-ribose 1-diphosphate: step 5/9. IGPS catalyzes the conversion of PRFAR and glutamine to IGP, AICAR and glutamate. The HisH subunit catalyzes the hydrolysis of glutamine to glutamate and ammonia as part of the synthesis of IGP and AICAR. The resulting ammonia molecule is channeled to the active site of HisF. This is Imidazole glycerol phosphate synthase subunit HisH from Nostoc punctiforme (strain ATCC 29133 / PCC 73102).